The chain runs to 769 residues: Sensor histidine kinase ComP (769 aa).

The Cytoplasmic portion of the chain corresponds to 1-9; the sequence is MKNLIKKFT. A helical transmembrane segment spans residues 10 to 33; it reads IAVIVLSILYISYTTYISMNGIII. The Extracellular segment spans residues 34–113; that stretch reads GTKIHKNDKS…DFDLVTLNRP (80 aa). The helical transmembrane segment at 114–134 threads the bilayer; the sequence is YSFFLFVLPLFFYFLSIICIF. Residues 135–144 are Cytoplasmic-facing; that stretch reads YILKVNKKRR. The helical transmembrane segment at 145–167 threads the bilayer; that stretch reads SFAAYILILLLLDISIAYISAGG. At 168-235 the chain is on the extracellular side; sequence PFRGHIINRY…QDYLQVDIDF (68 aa). A helical membrane pass occupies residues 236-257; sequence LATLNLVSFATLTLFSFSAIYL. Residues 258-272 lie on the Cytoplasmic side of the membrane; that stretch reads HLNKYKYAEHSFILK. The chain crosses the membrane as a helical span at residues 273–295; that stretch reads LLILTNTLSFAPFLIFFVLPIIF. The Extracellular portion of the chain corresponds to 296–299; it reads TGNY. Residues 300–323 traverse the membrane as a helical segment; it reads IFPALASASLLVLIPFGLVYQFVA. At 324–337 the chain is on the cytoplasmic side; sequence NKMFDIEFILGRMR. A helical transmembrane segment spans residues 338–357; the sequence is YYALLAMIPTLLIVGALVLF. The Extracellular portion of the chain corresponds to 358–361; that stretch reads DVMD. Residues 362–383 form a helical membrane-spanning segment; sequence IQMNPVRQTVFFFVVMFAVFYF. Residues 384-769 are Cytoplasmic-facing; it reads KEVMDFKFRL…GFKADIEIEL (386 aa). Residues 571-769 form the Histidine kinase domain; sequence LARDLHDSVL…GFKADIEIEL (199 aa). The residue at position 576 (H576) is a Phosphohistidine; by autocatalysis.

Post-translationally, autophosphorylates on a histidine and transfers the phosphate group onto an aspartate in ComA, thus activating it.

Its subcellular location is the cell membrane. The catalysed reaction is ATP + protein L-histidine = ADP + protein N-phospho-L-histidine.. Its function is as follows. Sensor in the two-component regulatory system ComP/ComA involved in a major quorum response pathway that regulates the development of genetic competence. Plays a role in sporulation, at least partly interchangeable with that of SpoIIJ. Probably activates ComA by phosphorylation. This Bacillus subtilis (strain 168) protein is Sensor histidine kinase ComP (comP).